Here is a 258-residue protein sequence, read N- to C-terminus: Thiazole synthase (258 aa).

Lys-100 functions as the Schiff-base intermediate with DXP in the catalytic mechanism. Residues Gly-161, 187 to 188 (AG), and 209 to 210 (NS) each bind 1-deoxy-D-xylulose 5-phosphate.

This sequence belongs to the ThiG family. Homotetramer. Forms heterodimers with either ThiH or ThiS.

The protein resides in the plastid. It is found in the chloroplast. The enzyme catalyses [ThiS sulfur-carrier protein]-C-terminal-Gly-aminoethanethioate + 2-iminoacetate + 1-deoxy-D-xylulose 5-phosphate = [ThiS sulfur-carrier protein]-C-terminal Gly-Gly + 2-[(2R,5Z)-2-carboxy-4-methylthiazol-5(2H)-ylidene]ethyl phosphate + 2 H2O + H(+). It participates in cofactor biosynthesis; thiamine diphosphate biosynthesis. Functionally, catalyzes the rearrangement of 1-deoxy-D-xylulose 5-phosphate (DXP) to produce the thiazole phosphate moiety of thiamine. Sulfur is provided by the thiocarboxylate moiety of the carrier protein ThiS. In vitro, sulfur can be provided by H(2)S. The chain is Thiazole synthase from Cyanidioschyzon merolae (strain NIES-3377 / 10D) (Unicellular red alga).